An 84-amino-acid chain; its full sequence is Small ribosomal subunit protein bS20 (84 aa).

Over residues 62–72 (KNKARRLKSRA) the composition is skewed to basic residues. The segment at 62 to 84 (KNKARRLKSRAARWSNSATAASR) is disordered. Positions 75-84 (WSNSATAASR) are enriched in polar residues.

Belongs to the bacterial ribosomal protein bS20 family.

In terms of biological role, binds directly to 16S ribosomal RNA. This chain is Small ribosomal subunit protein bS20, found in Mycoplasmoides gallisepticum (strain R(low / passage 15 / clone 2)) (Mycoplasma gallisepticum).